Reading from the N-terminus, the 258-residue chain is Phosphoribosylformylglycinamidine synthase subunit PurQ (258 aa).

The 232-residue stretch at I7–D238 folds into the Glutamine amidotransferase type-1 domain. The active-site Nucleophile is C97. Residues H220 and E222 contribute to the active site.

As to quaternary structure, part of the FGAM synthase complex composed of 1 PurL, 1 PurQ and 2 PurS subunits.

It localises to the cytoplasm. The catalysed reaction is N(2)-formyl-N(1)-(5-phospho-beta-D-ribosyl)glycinamide + L-glutamine + ATP + H2O = 2-formamido-N(1)-(5-O-phospho-beta-D-ribosyl)acetamidine + L-glutamate + ADP + phosphate + H(+). The enzyme catalyses L-glutamine + H2O = L-glutamate + NH4(+). The protein operates within purine metabolism; IMP biosynthesis via de novo pathway; 5-amino-1-(5-phospho-D-ribosyl)imidazole from N(2)-formyl-N(1)-(5-phospho-D-ribosyl)glycinamide: step 1/2. Its function is as follows. Part of the phosphoribosylformylglycinamidine synthase complex involved in the purines biosynthetic pathway. Catalyzes the ATP-dependent conversion of formylglycinamide ribonucleotide (FGAR) and glutamine to yield formylglycinamidine ribonucleotide (FGAM) and glutamate. The FGAM synthase complex is composed of three subunits. PurQ produces an ammonia molecule by converting glutamine to glutamate. PurL transfers the ammonia molecule to FGAR to form FGAM in an ATP-dependent manner. PurS interacts with PurQ and PurL and is thought to assist in the transfer of the ammonia molecule from PurQ to PurL. In Thermoplasma volcanium (strain ATCC 51530 / DSM 4299 / JCM 9571 / NBRC 15438 / GSS1), this protein is Phosphoribosylformylglycinamidine synthase subunit PurQ.